The chain runs to 183 residues: MTEMKILIVTLTYIEKSIIDEIVNNLSSYGLEVDILLDSRKYLPISAFNWERLQYDAEKVLSFLKSIHDFNYDSIIFLADSDGYIDGYNFVFGLTIDNFAIIFLHRLREEFYNRKPDLDLFMKRVVKEVTHEVGHTLGLSHCNTTGCVMNFSNSVEDVDKKQAKFCKNCAHKIEKLSKYLQQK.

His-131 serves as a coordination point for Zn(2+). Catalysis depends on Glu-132, which acts as the Proton acceptor. Zn(2+) contacts are provided by His-135, His-141, Cys-142, Cys-147, and Cys-166.

The protein belongs to the peptidase M54 family. As to quaternary structure, monomer. Zn(2+) serves as cofactor.

Its function is as follows. Probable zinc metalloprotease whose natural substrate is unknown. The polypeptide is Archaemetzincin (Saccharolobus solfataricus (strain ATCC 35092 / DSM 1617 / JCM 11322 / P2) (Sulfolobus solfataricus)).